Consider the following 473-residue polypeptide: Photosystem II CP43 reaction center protein (473 aa).

Residues 1–14 (MKTLYSLRRFYPVE) constitute a propeptide that is removed on maturation. At Thr-15 the chain carries N-acetylthreonine. Residue Thr-15 is modified to Phosphothreonine. Transmembrane regions (helical) follow at residues 69-93 (LFEV…PHLA), 134-155 (LLGP…KDRN), 178-200 (KALY…RRIT), 255-275 (KPFA…LSYS), and 291-312 (WFNN…ASQA). Glu-367 serves as a coordination point for [CaMn4O5] cluster. The chain crosses the membrane as a helical span at residues 447–471 (RARAAAAGFEKGIDRDFEPVLFMTP).

The protein belongs to the PsbB/PsbC family. PsbC subfamily. PSII is composed of 1 copy each of membrane proteins PsbA, PsbB, PsbC, PsbD, PsbE, PsbF, PsbH, PsbI, PsbJ, PsbK, PsbL, PsbM, PsbT, PsbX, PsbY, PsbZ, Psb30/Ycf12, at least 3 peripheral proteins of the oxygen-evolving complex and a large number of cofactors. It forms dimeric complexes. Binds multiple chlorophylls and provides some of the ligands for the Ca-4Mn-5O cluster of the oxygen-evolving complex. It may also provide a ligand for a Cl- that is required for oxygen evolution. PSII binds additional chlorophylls, carotenoids and specific lipids. serves as cofactor.

The protein resides in the plastid. Its subcellular location is the chloroplast thylakoid membrane. One of the components of the core complex of photosystem II (PSII). It binds chlorophyll and helps catalyze the primary light-induced photochemical processes of PSII. PSII is a light-driven water:plastoquinone oxidoreductase, using light energy to abstract electrons from H(2)O, generating O(2) and a proton gradient subsequently used for ATP formation. The sequence is that of Photosystem II CP43 reaction center protein from Nuphar advena (Common spatterdock).